The chain runs to 269 residues: uncharacterized protein (269 aa).

The next 6 membrane-spanning stretches (helical) occupy residues 21-43 (LNVW…ILFT), 48-70 (LFLI…FSLI), 121-143 (YLIL…VFTF), 147-166 (FIIA…FWII), 205-227 (SLEV…LFQF), and 242-264 (FVAF…YLLW).

The protein resides in the cell membrane. This is an uncharacterized protein from Aquifex aeolicus (strain VF5).